The sequence spans 267 residues: MSNKVHLGHTARKRFGQNFLTDHNVINRIVGAISPDNDHVMVEIGPGLAALTEPVANAIDKLTVVELDKDLVARLQEHPTLKDKLDIHQGDALQFDFSQLVEEGRQMKVFGNLPYNISTPLMFHLFEFAEQIENMHFMLQKEVVLRLSASPGTKAYGRLTVMAQYHCQVMPVLEVPPGSFTPPPKVDSAVVRLVPYKVKPWPCKDVDQLRHLTTTAFNMRRKTLRNNLKHMISDEEFAELGIDATLRPEQITVEQYVAMANFVVDKQ.

Positions 18, 20, 45, 66, 91, and 112 each coordinate S-adenosyl-L-methionine.

It belongs to the class I-like SAM-binding methyltransferase superfamily. rRNA adenine N(6)-methyltransferase family. RsmA subfamily.

Its subcellular location is the cytoplasm. The enzyme catalyses adenosine(1518)/adenosine(1519) in 16S rRNA + 4 S-adenosyl-L-methionine = N(6)-dimethyladenosine(1518)/N(6)-dimethyladenosine(1519) in 16S rRNA + 4 S-adenosyl-L-homocysteine + 4 H(+). Its function is as follows. Specifically dimethylates two adjacent adenosines (A1518 and A1519) in the loop of a conserved hairpin near the 3'-end of 16S rRNA in the 30S particle. May play a critical role in biogenesis of 30S subunits. In Shewanella woodyi (strain ATCC 51908 / MS32), this protein is Ribosomal RNA small subunit methyltransferase A.